A 39-amino-acid polypeptide reads, in one-letter code: Cytochrome b559 subunit beta (39 aa).

Residues 14–30 traverse the membrane as a helical segment; that stretch reads WLAVHGLAVPTVFFLGS. Histidine 18 serves as a coordination point for heme.

Belongs to the PsbE/PsbF family. In terms of assembly, heterodimer of an alpha subunit and a beta subunit. PSII is composed of 1 copy each of membrane proteins PsbA, PsbB, PsbC, PsbD, PsbE, PsbF, PsbH, PsbI, PsbJ, PsbK, PsbL, PsbM, PsbT, PsbX, PsbY, PsbZ, Psb30/Ycf12, at least 3 peripheral proteins of the oxygen-evolving complex and a large number of cofactors. It forms dimeric complexes. Requires heme b as cofactor.

The protein localises to the plastid. Its subcellular location is the chloroplast thylakoid membrane. Functionally, this b-type cytochrome is tightly associated with the reaction center of photosystem II (PSII). PSII is a light-driven water:plastoquinone oxidoreductase that uses light energy to abstract electrons from H(2)O, generating O(2) and a proton gradient subsequently used for ATP formation. It consists of a core antenna complex that captures photons, and an electron transfer chain that converts photonic excitation into a charge separation. This is Cytochrome b559 subunit beta from Pinus koraiensis (Korean pine).